Here is a 186-residue protein sequence, read N- to C-terminus: Ran guanine nucleotide release factor (186 aa).

An interaction with RAN region spans residues 27-70 (DLRPVPDHQEVFCHRVTDQSLIVELLELQAHVQGEEAARYHFED).

The protein belongs to the MOG1 family. In terms of assembly, monomer. Interacts with RAN, both RAN-GTP and RAN-GDP. Competes with RCC1 for a common binding site on RAN and thereby inhibits RCC1-mediated nucleotide exchange. Forms a complex with RAN-GTP and RANBP1. Interacts with the cytoplasmic loop 2 of SCN5A.

It is found in the nucleus. Its subcellular location is the cytoplasm. It localises to the perinuclear region. The protein resides in the cell membrane. Its function is as follows. May regulate the intracellular trafficking of RAN. Promotes guanine nucleotide release from RAN and inhibits binding of new GTP by preventing the binding of the RAN guanine nucleotide exchange factor RCC1. Regulates the levels of GTP-bound RAN in the nucleus, and thereby plays a role in the regulation of RAN-dependent mitotic spindle dynamics. Enhances the expression of SCN5A at the cell membrane in cardiomyocytes. In Bos taurus (Bovine), this protein is Ran guanine nucleotide release factor (RANGRF).